A 147-amino-acid polypeptide reads, in one-letter code: MKLWVDADACPKVIRETIVRAAERTGVECTFVANHVVPVPKRANIHSLQVPAGFDIADNEIVRRVEANDLVITSDIPLADEVISKGAQALSSRGELYTKDTIKARLNIRDFMDTMRSSGIQTGGPAALSQTERREFANHLDRILAKR.

It belongs to the UPF0178 family.

The protein is UPF0178 protein VIBHAR_03247 of Vibrio campbellii (strain ATCC BAA-1116).